The sequence spans 215 residues: Histidine biosynthesis bifunctional protein HisIE (215 aa).

Residues 1–126 (MSHSDLPLAN…GHKSPPPADM (126 aa)) form a phosphoribosyl-AMP cyclohydrolase region. The phosphoribosyl-ATP pyrophosphohydrolase stretch occupies residues 127–215 (LTELARVIGD…VYRKLGDRRR (89 aa)).

It in the N-terminal section; belongs to the PRA-CH family. This sequence in the C-terminal section; belongs to the PRA-PH family.

It is found in the cytoplasm. The catalysed reaction is 1-(5-phospho-beta-D-ribosyl)-ATP + H2O = 1-(5-phospho-beta-D-ribosyl)-5'-AMP + diphosphate + H(+). It catalyses the reaction 1-(5-phospho-beta-D-ribosyl)-5'-AMP + H2O = 1-(5-phospho-beta-D-ribosyl)-5-[(5-phospho-beta-D-ribosylamino)methylideneamino]imidazole-4-carboxamide. It functions in the pathway amino-acid biosynthesis; L-histidine biosynthesis; L-histidine from 5-phospho-alpha-D-ribose 1-diphosphate: step 2/9. It participates in amino-acid biosynthesis; L-histidine biosynthesis; L-histidine from 5-phospho-alpha-D-ribose 1-diphosphate: step 3/9. In Synechocystis sp. (strain ATCC 27184 / PCC 6803 / Kazusa), this protein is Histidine biosynthesis bifunctional protein HisIE (hisI).